The chain runs to 422 residues: Elongation factor 1-alpha (422 aa).

A tr-type G domain is found at 5-221 (KPHMNLAVIG…NSLKEPEKPS (217 aa)). The G1 stretch occupies residues 14–21 (GHIDHGKS). 14–21 (GHIDHGKS) serves as a coordination point for GTP. S21 provides a ligand contact to Mg(2+). The G2 stretch occupies residues 70-74 (GITID). A G3 region spans residues 91–94 (DCPG). GTP contacts are provided by residues 91–95 (DCPGH) and 146–149 (NKMD). The G4 stretch occupies residues 146-149 (NKMD). The tract at residues 185–187 (SAF) is G5.

The protein belongs to the TRAFAC class translation factor GTPase superfamily. Classic translation factor GTPase family. EF-Tu/EF-1A subfamily.

The protein localises to the cytoplasm. The catalysed reaction is GTP + H2O = GDP + phosphate + H(+). In terms of biological role, GTP hydrolase that promotes the GTP-dependent binding of aminoacyl-tRNA to the A-site of ribosomes during protein biosynthesis. In Methanosarcina mazei (strain ATCC BAA-159 / DSM 3647 / Goe1 / Go1 / JCM 11833 / OCM 88) (Methanosarcina frisia), this protein is Elongation factor 1-alpha.